A 1362-amino-acid chain; its full sequence is Integrator complex subunit 2 homolog (1362 aa).

The segment covering 1 to 10 (MITSNNNNKN) has biased composition (low complexity). Disordered regions lie at residues 1 to 20 (MITSNNNNKNNNKKDVEMKS), 629 to 660 (TTGTTTGISPSSSTTTTSSTGGATSTSISSPN), and 928 to 963 (NNNKDLEDYNNNNNNNNDDVKMKDKEKEDKEEEEEE). Residues 945-955 (DDVKMKDKEKE) are compositionally biased toward basic and acidic residues.

The protein belongs to the Integrator subunit 2 family. As to quaternary structure, component of the Integrator complex. The core complex associates with protein phosphatase 2A subunits, to form the Integrator-PP2A (INTAC) complex.

It is found in the nucleus. Its subcellular location is the cytoplasm. Functionally, component of the integrator complex, a multiprotein complex that terminates RNA polymerase II (Pol II) transcription in the promoter-proximal region of genes. The integrator complex provides a quality checkpoint during transcription elongation by driving premature transcription termination of transcripts that are unfavorably configured for transcriptional elongation: the complex terminates transcription by (1) catalyzing dephosphorylation of the C-terminal domain (CTD) of Pol II subunit polr2a, (2) degrading the exiting nascent RNA transcript via endonuclease activity and (3) promoting the release of Pol II from bound DNA. The integrator complex is also involved in terminating the synthesis of non-coding Pol II transcripts, such as enhancer RNAs (eRNAs), small nuclear RNAs (snRNAs), telomerase RNAs and long non-coding RNAs (lncRNAs). The chain is Integrator complex subunit 2 homolog (ints2) from Dictyostelium discoideum (Social amoeba).